A 120-amino-acid chain; its full sequence is Galanin-like peptide (120 aa).

The first 22 residues, 1 to 22 (MALTVPLIVLAVLLSLMESPAS), serve as a signal peptide directing secretion. Residues 85-120 (SLGETFAKPDSGVTFVGVPDVVPWKRIRPGTTRFQI) constitute a propeptide that is removed on maturation.

This sequence belongs to the galanin family.

The protein resides in the secreted. Its function is as follows. Hypothalamic neuropeptide which binds to the G-protein-coupled galanin receptors (GALR1, GALR2 and GALR3). Involved in a large number of putative physiological functions in CNS homeostatic processes, including the regulation of gonadotropin-releasing hormone secretion. The chain is Galanin-like peptide (GALP) from Sus scrofa (Pig).